Here is a 179-residue protein sequence, read N- to C-terminus: Large ribosomal subunit protein uL5 (179 aa).

This sequence belongs to the universal ribosomal protein uL5 family. In terms of assembly, part of the 50S ribosomal subunit; part of the 5S rRNA/L5/L18/L25 subcomplex. Contacts the 5S rRNA and the P site tRNA. Forms a bridge to the 30S subunit in the 70S ribosome.

In terms of biological role, this is one of the proteins that bind and probably mediate the attachment of the 5S RNA into the large ribosomal subunit, where it forms part of the central protuberance. In the 70S ribosome it contacts protein S13 of the 30S subunit (bridge B1b), connecting the 2 subunits; this bridge is implicated in subunit movement. Contacts the P site tRNA; the 5S rRNA and some of its associated proteins might help stabilize positioning of ribosome-bound tRNAs. The polypeptide is Large ribosomal subunit protein uL5 (Vesicomyosocius okutanii subsp. Calyptogena okutanii (strain HA)).